The sequence spans 1684 residues: Protein Wiz (1684 aa).

Residues Met-1–Ala-77 are disordered. A compositionally biased stretch (basic and acidic residues) spans Asp-13–Ile-24. C2H2-type zinc fingers lie at residues Phe-308–His-330, Leu-345–His-367, Asn-454–His-477, Arg-734–His-756, and Met-802–His-824. The tract at residues Leu-854–Pro-876 is disordered. The segment at Thr-903–His-925 adopts a C2H2-type 6 zinc-finger fold. Residues Lys-916, Lys-972, Lys-988, Lys-1000, and Lys-1021 each participate in a glycyl lysine isopeptide (Lys-Gly) (interchain with G-Cter in SUMO2) cross-link. Residues Phe-1005–Pro-1072 are disordered. The residue at position 1029 (Ser-1029) is a Phosphoserine. A Phosphothreonine modification is found at Thr-1031. Residues Lys-1033 and Lys-1038 each participate in a glycyl lysine isopeptide (Lys-Gly) (interchain with G-Cter in SUMO2) cross-link. Phosphoserine occurs at positions 1039 and 1045. The segment covering Pro-1040–Gln-1057 has biased composition (polar residues). Residue Thr-1049 is modified to Phosphothreonine. Ser-1050 and Ser-1058 each carry phosphoserine. The interval Pro-1063–Thr-1067 is interaction with CTBP1 and CTBP2 1. The C2H2-type 7 zinc-finger motif lies at Ile-1076 to His-1098. Lys-1089 participates in a covalent cross-link: Glycyl lysine isopeptide (Lys-Gly) (interchain with G-Cter in SUMO2). Residues Ser-1112 and Ser-1139 each carry the phosphoserine modification. Positions Ser-1127–Lys-1208 are disordered. Glycyl lysine isopeptide (Lys-Gly) (interchain with G-Cter in SUMO2) cross-links involve residues Lys-1141 and Lys-1145. Phosphoserine is present on residues Ser-1155, Ser-1160, and Ser-1167. Glycyl lysine isopeptide (Lys-Gly) (interchain with G-Cter in SUMO2) cross-links involve residues Lys-1171 and Lys-1172. Ser-1179 and Ser-1184 each carry phosphoserine. Lys-1195 carries the N6,N6,N6-trimethyllysine; by EHMT2; alternate modification. Residue Lys-1195 is modified to N6,N6-dimethyllysine; by EHMT2; alternate. Residue Lys-1210 forms a Glycyl lysine isopeptide (Lys-Gly) (interchain with G-Cter in SUMO2) linkage. The tract at residues Pro-1247 to Ser-1251 is interaction with CTBP1 and CTBP2 2. The C2H2-type 8 zinc-finger motif lies at Ile-1260–His-1282. Residue Lys-1273 forms a Glycyl lysine isopeptide (Lys-Gly) (interchain with G-Cter in SUMO2) linkage. Residue Ser-1296 is modified to Phosphoserine. Residue Lys-1315 forms a Glycyl lysine isopeptide (Lys-Gly) (interchain with G-Cter in SUMO2) linkage. Positions Ala-1320–Gly-1384 are disordered. Residues Ala-1335–Ser-1351 are compositionally biased toward low complexity. Phosphoserine occurs at positions 1342 and 1347. Residues Lys-1376, Lys-1389, Lys-1403, Lys-1405, and Lys-1415 each participate in a glycyl lysine isopeptide (Lys-Gly) (interchain with G-Cter in SUMO2) cross-link. The segment at Ala-1430–His-1452 adopts a C2H2-type 9 zinc-finger fold. Residues Lys-1481, Lys-1497, and Lys-1510 each participate in a glycyl lysine isopeptide (Lys-Gly) (interchain with G-Cter in SUMO2) cross-link. 2 disordered regions span residues Thr-1496–Val-1587 and Gln-1592–Val-1611. The residue at position 1550 (Ser-1550) is a Phosphoserine. Residue Lys-1556 forms a Glycyl lysine isopeptide (Lys-Gly) (interchain with G-Cter in SUMO1); alternate linkage. A Glycyl lysine isopeptide (Lys-Gly) (interchain with G-Cter in SUMO2); alternate cross-link involves residue Lys-1556. Positions Lys-1556–Arg-1574 are enriched in basic and acidic residues. Residues Lys-1567 and Lys-1593 each participate in a glycyl lysine isopeptide (Lys-Gly) (interchain with G-Cter in SUMO2) cross-link. Residues Gln-1599 to Val-1611 show a composition bias toward pro residues. The segment at Leu-1629–His-1655 adopts a C2H2-type 10 zinc-finger fold. A disordered region spans residues Ser-1662 to Pro-1684. Lys-1663 is covalently cross-linked (Glycyl lysine isopeptide (Lys-Gly) (interchain with G-Cter in SUMO2)). Low complexity predominate over residues Gln-1672–Pro-1684.

This sequence belongs to the krueppel C2H2-type zinc-finger protein family. As to quaternary structure, part of a complex containing at least CDYL, REST, WIZ, SETB1, EHMT1 and EHMT2. Interacts with EHMT1, EHMT2, CTBP1 and CTBP2. As to expression, according to PubMed:9795207, isoform L and isoform S are brain-specific. According to PubMed:16702210, isoform S is ubiquitously expressed.

The protein resides in the nucleus. May link EHMT1 and EHMT2 histone methyltransferases to the CTBP corepressor machinery. May be involved in EHMT1-EHMT2 heterodimer formation and stabilization. The sequence is that of Protein Wiz (Wiz) from Mus musculus (Mouse).